The primary structure comprises 338 residues: P2Y purinoceptor 14 (338 aa).

Residues 1-29 are Extracellular-facing; that stretch reads MNNSTTTDPPNQPCSWNTLITKQIIPVLY. N-linked (GlcNAc...) asparagine glycosylation is found at N2 and N3. Residues 30-50 traverse the membrane as a helical segment; sequence GMVFITGLLLNGISGWIFFYV. The Cytoplasmic segment spans residues 51–55; it reads PSSKS. A helical transmembrane segment spans residues 56–76; the sequence is FIIYLKNIVVADFLMGLTFPF. At 77 to 96 the chain is on the extracellular side; it reads KVLGDSGLGPWQVNVFVCRV. Cysteines 94 and 172 form a disulfide. A helical membrane pass occupies residues 97-117; it reads SAVIFYVNMYVSIVFFGLISF. At 118–139 the chain is on the cytoplasmic side; it reads DRYYKIVKPLLTSIVQSVNYSK. Residues 140-160 traverse the membrane as a helical segment; sequence LLSVLVWMLMLLLAVPNIILT. Residues 161–188 lie on the Extracellular side of the membrane; it reads NQGVKEVTKIQCMELKNELGRKWHKASN. A helical transmembrane segment spans residues 189–209; sequence YIFVSIFWVVFLLLIVFYTAI. The Cytoplasmic portion of the chain corresponds to 210-234; it reads TRKIFKSHLKSRKNSTSVKRKSSRN. Residues 235 to 255 traverse the membrane as a helical segment; the sequence is IFSIVLVFVVCFVPYHIARIP. Over 256–278 the chain is Extracellular; sequence YTKSQTEGHYSCRTKETLLYAKE. Residues 279 to 299 traverse the membrane as a helical segment; sequence FTLLLSAANVCLDPIIYFFLC. Residues 300–338 lie on the Cytoplasmic side of the membrane; that stretch reads QPFREVLNKKLHMSLKVQNDLEVSKTKRENAIHESTDTL.

This sequence belongs to the G-protein coupled receptor 1 family.

The protein resides in the cell membrane. Receptor for UDP-glucose coupled to G-proteins. This chain is P2Y purinoceptor 14 (P2ry14), found in Mus musculus (Mouse).